The primary structure comprises 241 residues: Phosphoribosyl isomerase A (241 aa).

Aspartate 11 acts as the Proton acceptor in catalysis. Aspartate 130 serves as the catalytic Proton donor.

Belongs to the HisA/HisF family.

It is found in the cytoplasm. The catalysed reaction is 1-(5-phospho-beta-D-ribosyl)-5-[(5-phospho-beta-D-ribosylamino)methylideneamino]imidazole-4-carboxamide = 5-[(5-phospho-1-deoxy-D-ribulos-1-ylimino)methylamino]-1-(5-phospho-beta-D-ribosyl)imidazole-4-carboxamide. The enzyme catalyses N-(5-phospho-beta-D-ribosyl)anthranilate = 1-(2-carboxyphenylamino)-1-deoxy-D-ribulose 5-phosphate. The protein operates within amino-acid biosynthesis; L-histidine biosynthesis; L-histidine from 5-phospho-alpha-D-ribose 1-diphosphate: step 4/9. Its pathway is amino-acid biosynthesis; L-tryptophan biosynthesis; L-tryptophan from chorismate: step 3/5. Functionally, involved in both the histidine and tryptophan biosynthetic pathways. In Streptomyces griseus subsp. griseus (strain JCM 4626 / CBS 651.72 / NBRC 13350 / KCC S-0626 / ISP 5235), this protein is Phosphoribosyl isomerase A.